The following is a 246-amino-acid chain: Transcriptional regulatory protein LytR (246 aa).

The 115-residue stretch at Lys-2–Arg-116 folds into the Response regulatory domain. At Asp-53 the chain carries 4-aspartylphosphate. The region spanning Leu-141–Leu-245 is the HTH LytTR-type domain.

In terms of assembly, homodimer; when phosphorylated. Post-translationally, phosphorylated and dephosphorylated by LytS.

The protein resides in the cytoplasm. Its function is as follows. Member of the two-component regulatory system LytR/LytS that regulates genes involved in autolysis, programmed cell death, biofilm formation and cell wall metabolism. Also participates in sensing and responding to host defense cationic antimicrobial peptides (HDPs). Upon phosphorylation by LytS, functions as a transcription regulator by direct binding to promoter regions of target genes including lrgA and lrgB, to positively regulate their expression. In Staphylococcus aureus (strain USA300), this protein is Transcriptional regulatory protein LytR (lytR).